A 137-amino-acid polypeptide reads, in one-letter code: MTVIDAEGAILGRLASEVAKRVLRGEEIVIVNAEMVVITGNKDWIIKTYQEEREKKNVANPRRFGPKFPRRPDDILRRTIRKMLPYKKPKGREAFKRVKVYVGNPKNLTVDEKISHKLNTTKYITLAELSKHLGAKF.

It belongs to the universal ribosomal protein uL13 family. As to quaternary structure, part of the 50S ribosomal subunit.

This protein is one of the early assembly proteins of the 50S ribosomal subunit, although it is not seen to bind rRNA by itself. It is important during the early stages of 50S assembly. This Methanocaldococcus jannaschii (strain ATCC 43067 / DSM 2661 / JAL-1 / JCM 10045 / NBRC 100440) (Methanococcus jannaschii) protein is Large ribosomal subunit protein uL13.